The chain runs to 314 residues: DNA-directed RNA polymerase subunit alpha (314 aa).

The interval 1 to 228 (MIEIEKPKIE…EHLNIFVGLT (228 aa)) is alpha N-terminal domain (alpha-NTD). The tract at residues 245–314 (KEKVLEMTIE…ELGLGLRKDD (70 aa)) is alpha C-terminal domain (alpha-CTD).

This sequence belongs to the RNA polymerase alpha chain family. As to quaternary structure, homodimer. RNAP is composed of a core of 2 alpha, a beta and a beta' subunit. The core is associated with a delta subunit, and at least one of epsilon or omega. When a sigma factor is associated with the core the holoenzyme is formed, which can initiate transcription.

It carries out the reaction RNA(n) + a ribonucleoside 5'-triphosphate = RNA(n+1) + diphosphate. DNA-dependent RNA polymerase catalyzes the transcription of DNA into RNA using the four ribonucleoside triphosphates as substrates. The polypeptide is DNA-directed RNA polymerase subunit alpha (Bacillus subtilis (strain 168)).